The sequence spans 118 residues: NADH-ubiquinone oxidoreductase chain 3 (118 aa).

A run of 3 helical transmembrane segments spans residues M1 to F21, Y59 to L79, and V86 to L106.

Belongs to the complex I subunit 3 family.

The protein resides in the mitochondrion membrane. The enzyme catalyses a ubiquinone + NADH + 5 H(+)(in) = a ubiquinol + NAD(+) + 4 H(+)(out). Core subunit of the mitochondrial membrane respiratory chain NADH dehydrogenase (Complex I) that is believed to belong to the minimal assembly required for catalysis. Complex I functions in the transfer of electrons from NADH to the respiratory chain. The immediate electron acceptor for the enzyme is believed to be ubiquinone. The polypeptide is NADH-ubiquinone oxidoreductase chain 3 (ND3) (Fasciola hepatica (Liver fluke)).